Consider the following 346-residue polypeptide: Farnesyl diphosphate synthase 1 (346 aa).

3 residues coordinate isopentenyl diphosphate: Lys52, Arg55, and Gln90. Asp97 and Asp101 together coordinate Mg(2+). The DDXXD motif signature appears at Asp97–Asp101. Residue Arg106 coordinates dimethylallyl diphosphate. Arg107 serves as a coordination point for isopentenyl diphosphate. The dimethylallyl diphosphate site is built by Lys194, Thr195, and Gln233. The DDXXD motif motif lies at Asp236–Asp240. Positions 250 and 259 each coordinate dimethylallyl diphosphate.

The protein belongs to the FPP/GGPP synthase family. It depends on Mg(2+) as a cofactor. Mn(2+) serves as cofactor. In terms of tissue distribution, highly expressed in shoots.

The enzyme catalyses isopentenyl diphosphate + (2E)-geranyl diphosphate = (2E,6E)-farnesyl diphosphate + diphosphate. It catalyses the reaction isopentenyl diphosphate + dimethylallyl diphosphate = (2E)-geranyl diphosphate + diphosphate. It participates in isoprenoid biosynthesis; farnesyl diphosphate biosynthesis; farnesyl diphosphate from geranyl diphosphate and isopentenyl diphosphate: step 1/1. Its pathway is isoprenoid biosynthesis; geranyl diphosphate biosynthesis; geranyl diphosphate from dimethylallyl diphosphate and isopentenyl diphosphate: step 1/1. Functionally, catalyzes the sequential condensation of isopentenyl pyrophosphate (IPP) with the allylic pyrophosphates, dimethylallyl pyrophosphate (DMAPP), and then with the resultant geranylpyrophosphate (GPP) to the ultimate product farnesyl pyrophosphate (FPP). Has a 4.5 time greater affinity for GPP versus DMAPP. The sequence is that of Farnesyl diphosphate synthase 1 (FDS-1) from Artemisia spiciformis (Spiked big sagebrush).